A 637-amino-acid polypeptide reads, in one-letter code: 3D-(3,5/4)-trihydroxycyclohexane-1,2-dione hydrolase (637 aa).

Glu-66 is a thiamine diphosphate binding site. The segment at 442 to 522 (SLPGDLQRLW…INILLFDNAG (81 aa)) is thiamine pyrophosphate binding. Mg(2+)-binding residues include Asp-493 and Asn-520.

Belongs to the TPP enzyme family. The cofactor is Mg(2+). Thiamine diphosphate serves as cofactor.

It carries out the reaction 3D-3,5/4-trihydroxycyclohexane-1,2-dione + H2O = 5-deoxy-D-glucuronate + H(+). Its pathway is polyol metabolism; myo-inositol degradation into acetyl-CoA; acetyl-CoA from myo-inositol: step 3/7. Involved in the cleavage of the C1-C2 bond of 3D-(3,5/4)-trihydroxycyclohexane-1,2-dione (THcHDO) to yield 5-deoxy-glucuronate (5DG). The sequence is that of 3D-(3,5/4)-trihydroxycyclohexane-1,2-dione hydrolase from Shouchella clausii (strain KSM-K16) (Alkalihalobacillus clausii).